Reading from the N-terminus, the 183-residue chain is Non-specific lipid transfer protein GPI-anchored 15 (183 aa).

A signal peptide spans 1–24; sequence MGYRRSYAITFVALVAALWSVTKA. Disulfide bonds link C30-C71, C40-C55, C56-C97, and C69-C107. 2 N-linked (GlcNAc...) asparagine glycosylation sites follow: N47 and N86. The tract at residues 108–158 is disordered; the sequence is NAATGPTAQPPAPSPTEKTPDVTLTPTSLPGARSGVGGGSKTVPSVGTGSS. Polar residues predominate over residues 149–158; it reads TVPSVGTGSS. S158 carries the GPI-anchor amidated serine lipid modification. The propeptide at 159 to 183 is removed in mature form; sequence SRNVDPLPLHFLMFAVLVVCTSSFL.

It belongs to the plant LTP family. Expressed in seedlings, preferentially in the endodermis of hypocotyls and roots. Also observed in siliques.

It localises to the cell membrane. Its function is as follows. Probable lipid transfer protein. The sequence is that of Non-specific lipid transfer protein GPI-anchored 15 from Arabidopsis thaliana (Mouse-ear cress).